The following is a 96-amino-acid chain: Evasin P1074 (96 aa).

The signal sequence occupies residues 1–28 (MAFNMITFLQMAVFVVILFNINLHSASA). Cystine bridges form between Cys48-Cys67, Cys52-Cys69, and Cys63-Cys80. Asn74 carries N-linked (GlcNAc...) asparagine glycosylation.

Its subcellular location is the secreted. Functionally, salivary chemokine-binding protein which binds to host chemokines CXCL1 and CXCL8. This Ixodes ricinus (Common tick) protein is Evasin P1074.